The chain runs to 97 residues: Putative pterin-4-alpha-carbinolamine dehydratase (97 aa).

It belongs to the pterin-4-alpha-carbinolamine dehydratase family.

It catalyses the reaction (4aS,6R)-4a-hydroxy-L-erythro-5,6,7,8-tetrahydrobiopterin = (6R)-L-erythro-6,7-dihydrobiopterin + H2O. This is Putative pterin-4-alpha-carbinolamine dehydratase from Rhizorhabdus wittichii (strain DSM 6014 / CCUG 31198 / JCM 15750 / NBRC 105917 / EY 4224 / RW1) (Sphingomonas wittichii).